The chain runs to 290 residues: Lipid phosphate phosphatase 2 (290 aa).

The next 3 membrane-spanning stretches (helical) occupy residues W26 to H46, W69 to I89, and V93 to I113. N142 carries an N-linked (GlcNAc...) asparagine glycan. 3 consecutive transmembrane segments (helical) span residues S162–L182, G193–V213, and V226–P246.

Belongs to the PA-phosphatase related phosphoesterase family. As to expression, expressed in roots, stems, leaves, buds, flowers and siliques.

It is found in the membrane. Its activity is regulated as follows. PA phosphatase activity not inhibited by N-ethylmaleimide. In terms of biological role, may play a general 'housekeeping role' in lipid metabolism. Exhibits both diacylglycerol pyrophosphate (DGPP) phosphatase and phosphatidate (PA) phosphatase activities with no preference for either substrate. May play a role downstream of the ABA signaling pathway during seed germination and in stomatal movement in leaves. The protein is Lipid phosphate phosphatase 2 (LPP2) of Arabidopsis thaliana (Mouse-ear cress).